The chain runs to 198 residues: T-cell surface glycoprotein CD3 epsilon chain (198 aa).

The signal sequence occupies residues 1 to 21 (MRAGTLWRVLALWLLSVAAWG). Residues 22 to 120 (QEDDDHADDY…EACMEVDLTT (99 aa)) are Extracellular-facing. The Ig-like domain maps to 28-106 (ADDYTQKLFT…KENEHILYLK (79 aa)). Cys-49 and Cys-90 form a disulfide bridge. Residues 121-141 (VASIVVADVCVTLGLLLLVYY) traverse the membrane as a helical segment. At 142-198 (WSKNRKAKCKPVTRGAGAGGRPRGQNKERPPPVPNPDYEPIRKGQRDLYSGLNQRGI) the chain is on the cytoplasmic side. Positions 153–198 (VTRGAGAGGRPRGQNKERPPPVPNPDYEPIRKGQRDLYSGLNQRGI) are disordered. An NUMB-binding region region spans residues 166–183 (QNKERPPPVPNPDYEPIR). Residues 169-196 (ERPPPVPNPDYEPIRKGQRDLYSGLNQR) form the ITAM domain. The proline-rich sequence stretch occupies residues 170 to 177 (RPPPVPNP). Phosphotyrosine occurs at positions 179 and 190.

The TCR-CD3 complex is composed of a CD3D/CD3E and a CD3G/CD3E heterodimers that preferentially associate with TCRalpha and TCRbeta, respectively, to form TCRalpha/CD3E/CD3G and TCRbeta/CD3G/CD3E trimers. In turn, the hexamer interacts with CD3Z homodimer to form the TCR-CD3 complex. Alternatively, TCRalpha and TCRbeta can be replaced by TCRgamma and TCRdelta. Interacts with CD6. Interacts (via Proline-rich sequence) with NCK1; the interaction is ligand dependent but independent of tyrosine kinase activation. Post-translationally, phosphorylated on Tyr residues after T-cell receptor triggering by LCK in association with CD4/CD8.

It is found in the cell membrane. In terms of biological role, part of the TCR-CD3 complex present on T-lymphocyte cell surface that plays an essential role in adaptive immune response. When antigen presenting cells (APCs) activate T-cell receptor (TCR), TCR-mediated signals are transmitted across the cell membrane by the CD3 chains CD3D, CD3E, CD3G and CD3Z. All CD3 chains contain immunoreceptor tyrosine-based activation motifs (ITAMs) in their cytoplasmic domain. Upon TCR engagement, these motifs become phosphorylated by Src family protein tyrosine kinases LCK and FYN, resulting in the activation of downstream signaling pathways. In addition of this role of signal transduction in T-cell activation, CD3E plays an essential role in correct T-cell development. Also participates in internalization and cell surface down-regulation of TCR-CD3 complexes via endocytosis sequences present in CD3E cytosolic region. In addition to its role as a TCR coreceptor, it serves as a receptor for ITPRIPL1. Ligand recognition inhibits T-cell activation by promoting interaction with NCK1, which prevents CD3E-ZAP70 interaction and blocks the ERK-NFkB signaling cascade and calcium influx. This chain is T-cell surface glycoprotein CD3 epsilon chain (CD3E), found in Oryctolagus cuniculus (Rabbit).